We begin with the raw amino-acid sequence, 525 residues long: ADP-ribosylation factor GTPase-activating protein 3 (525 aa).

An Arf-GAP domain is found at 10-126 (LAIFKRLRSV…IKTLATQATR (117 aa)). The segment at 25 to 48 (CFDCGAKNPSWASISYGVFLCIDC) adopts a C4-type zinc-finger fold. Residues 160-233 (VSGATQASAQ…KGLGAKKGSL (74 aa)) are disordered. Over residues 162–177 (GATQASAQPEPASSTP) the composition is skewed to polar residues. A compositionally biased stretch (low complexity) spans 222–233 (AKKGLGAKKGSL). 4 positions are modified to phosphoserine: S232, S242, S271, and S275. Residues 249–271 (QAQAVDKRKEQEDLARGTPKEES) are disordered. Basic and acidic residues predominate over residues 293 to 305 (LNLSGQKKAEAER). Disordered regions lie at residues 293-364 (LNLS…SSSR) and 377-428 (FSSW…EAQK). Over residues 319–333 (HSVTSDMQTIEQESP) the composition is skewed to polar residues. S332 is subject to Phosphoserine. A compositionally biased stretch (low complexity) spans 349–363 (SYFSSSSKWSEQSSS). S379 carries the post-translational modification Phosphoserine. Over residues 387–398 (YWKKDSSRDPEP) the composition is skewed to basic and acidic residues. Phosphoserine is present on residues S437, S460, S462, S464, S466, and S467.

It is found in the cytoplasm. The protein localises to the golgi apparatus membrane. With respect to regulation, GAP activity stimulated by phosphatidylinositol 4,5-bisphosphate (PIP2). Functionally, GTPase-activating protein (GAP) for ADP ribosylation factor 1 (ARF1). Hydrolysis of ARF1-bound GTP may lead to dissociation of coatomer from Golgi-derived membranes to allow fusion with target membranes. The sequence is that of ADP-ribosylation factor GTPase-activating protein 3 from Rattus norvegicus (Rat).